Consider the following 382-residue polypeptide: MYIAGVMSGTSLDGIDVALVRIEGSGVESKVELIHFTTVPFCNDIKSEIQQALSIENSNVQLICSLNFKLGLCFANAVKEVCKEANFSLEQLDLIGSHGQTIYHQPKQDGNRIPSTLQIGEPAVIAYETNTTVISNFRTMDMAAGGQGAPLVPYSEVILYRDPSKNRLLQNIGGISNVTVIPNQQSDQNVIAFDTGPGNMIIDEVCQRLFQLPYDQNGEIAKQGRVVNEILTYCMSHQFLKMNPPKSTGREQFGEKFVSELLKRFEKHSKENILTTVTMFTANSIVHHYKKFILPYYEIDEVILGGGGSYNSTLVEMLRNGLKDENCAIFIQEDIGYSSEAKEAIAFAILANETHHCNPSNVPSATGAKQSVVLGNITFPPV.

9–16 (GTSLDGID) provides a ligand contact to ATP.

The protein belongs to the anhydro-N-acetylmuramic acid kinase family.

The enzyme catalyses 1,6-anhydro-N-acetyl-beta-muramate + ATP + H2O = N-acetyl-D-muramate 6-phosphate + ADP + H(+). The protein operates within amino-sugar metabolism; 1,6-anhydro-N-acetylmuramate degradation. It participates in cell wall biogenesis; peptidoglycan recycling. In terms of biological role, catalyzes the specific phosphorylation of 1,6-anhydro-N-acetylmuramic acid (anhMurNAc) with the simultaneous cleavage of the 1,6-anhydro ring, generating MurNAc-6-P. Is required for the utilization of anhMurNAc either imported from the medium or derived from its own cell wall murein, and thus plays a role in cell wall recycling. The protein is Anhydro-N-acetylmuramic acid kinase of Bacillus cereus (strain 03BB102).